Reading from the N-terminus, the 285-residue chain is Bifunctional protein FolD (285 aa).

Residues 165–167 and Ser190 each bind NADP(+); that span reads GRS.

The protein belongs to the tetrahydrofolate dehydrogenase/cyclohydrolase family. In terms of assembly, homodimer.

It carries out the reaction (6R)-5,10-methylene-5,6,7,8-tetrahydrofolate + NADP(+) = (6R)-5,10-methenyltetrahydrofolate + NADPH. The enzyme catalyses (6R)-5,10-methenyltetrahydrofolate + H2O = (6R)-10-formyltetrahydrofolate + H(+). It functions in the pathway one-carbon metabolism; tetrahydrofolate interconversion. Catalyzes the oxidation of 5,10-methylenetetrahydrofolate to 5,10-methenyltetrahydrofolate and then the hydrolysis of 5,10-methenyltetrahydrofolate to 10-formyltetrahydrofolate. The polypeptide is Bifunctional protein FolD (Staphylococcus carnosus (strain TM300)).